The following is a 68-amino-acid chain: Protein SlyX homolog (68 aa).

The protein belongs to the SlyX family.

The protein is Protein SlyX homolog of Brucella anthropi (strain ATCC 49188 / DSM 6882 / CCUG 24695 / JCM 21032 / LMG 3331 / NBRC 15819 / NCTC 12168 / Alc 37) (Ochrobactrum anthropi).